Reading from the N-terminus, the 815-residue chain is (-)-kolavenyl diphosphate synthase TPS28, chloroplastic (815 aa).

The N-terminal 51 residues, 1-51 (MFMSSSSSSHARRPQLSSFSYLHPPLPFPGLSFFNTRDKRVNFDSTRIICI), are a transit peptide targeting the chloroplast. Lysine 247 serves as a coordination point for substrate. Residues aspartate 379 and aspartate 381 each coordinate Mg(2+). The short motif at 379 to 382 (DIDD) is the DXDD motif element. Substrate is bound at residue lysine 465.

It belongs to the terpene synthase family. Tpsc subfamily. Requires Mg(2+) as cofactor.

Its subcellular location is the plastid. It is found in the chloroplast. It carries out the reaction (2E,6E,10E)-geranylgeranyl diphosphate = (-)-kolavenyl diphosphate. Its activity is regulated as follows. Inhibited by high concentrations of magnesium. In terms of biological role, diterpene synthase that catalyzes the formation of (-)-kolavenyl diphosphate from geranylgeranyl diphosphate (GGPP). This is (-)-kolavenyl diphosphate synthase TPS28, chloroplastic from Tripterygium wilfordii (Thunder God vine).